The sequence spans 394 residues: GTPase Era, mitochondrial (394 aa).

The region spanning 32-280 (KCLQLAVIGA…RDHLMSISPQ (249 aa)) is the Era-type G domain. Positions 40 to 47 (GAPNVGKS) are G1. A GTP-binding site is contributed by 40–47 (GAPNVGKS). Residues 66–70 (DTTTR) form a G2 region. Positions 87-90 (DSPG) are G3. GTP is bound by residues 87–91 (DSPGA) and 160–163 (NKID). The segment at 160 to 163 (NKID) is G4. A G5 region spans residues 259–261 (VSS).

Belongs to the TRAFAC class TrmE-Era-EngA-EngB-Septin-like GTPase superfamily. Era GTPase family.

It localises to the mitochondrion matrix. The protein localises to the mitochondrion inner membrane. Functionally, probable GTPase that plays a role in the mitochondrial ribosomal small subunit assembly. Specifically binds the 12S mitochondrial rRNA (12S mt-rRNA) to a 33 nucleotide section delineating the 3' terminal stem-loop region. May act as a chaperone that protects the 12S mt-rRNA on the 28S mitoribosomal subunit during ribosomal small subunit assembly. May play a role in positively regulating mitochondrial function. Plays a role in fertility. This Caenorhabditis elegans protein is GTPase Era, mitochondrial.